We begin with the raw amino-acid sequence, 1169 residues long: MRLEKLKIAGFKSFVDPTTLPLPGNLVGVVGPNGCGKSNVIDAVRWVMGESSARHLRGETMADVIFNGSSTRKPASQASVELVFDNSSGRAGGEYARYQQIAIRRQVARDGQSSYFLNGTRCRRKDITDLFLGTGLGARSYAIIEQGTISRLIEAKPEEMREIIEEAAGISKYKERRHETEQRMRHTRENLERLADLREELGRQLGHLQRQARKAEKFIALRDEERRLKLELLGLRWRALERQLDRLKAELTDSEERFRRLTGEEHACETQLEGLNRLRGVAQEKLDVQQGRFYELGAEISRLDQFIRHTQKSRAELVQERERVEAELRKVESDRDDDRLRLEAVRAEAAELKGKLASLEQEVAEAVSVRQAAEAKLKTCREGWEALAGDRHRLEGQAALQRSRLQQLREHGQQLGGRRQRLLQQQSELEKALAALDVQAHRLEVAGIEAEREETVGAVEALAREAERQRDRLRFARERLNPARAGLHAVQGKVASLETLQRHAMGRDRSAAAAVLEAWQLSAADRLGEKIEVAPGWENAVETVLGAHLEAVCVDSLAPYLANLQAQEPAEFLALCEYRQGPVAEGTGGPRLLDYIRAPLALEGLLAGIYCASDPAEAAERARSLQPHESVVTPGGFRIGKGWVLAQKPDAGHAGALARERELRECRRRVEELEAQCRILEREASEAEVELERLESEGREARKKADELSAGLSLARSELAAAEARSEQWRHRLDQLSHELNELADQELELAEKRAEAEEALQTAERDSLRLQDVAAQRKGEWLALEEAFAAAEAAEKSLHEEVRALRSRAAMLESNAALTAAHLQRLEQQHGQTADRLAAIVQRLAESQTPLEDERSRLDALTEERGVLEAEMARQRRRLSELEADVRRVAGERQRAEHELAALRESIGQMKLAWQTAEVRRQGIEEQFAELGAAPAAVVAGLPEDAEESAWQASVIRLGEEIERLGPVNLTAMQEYQEQEARQRYLEEQDRDLTESLATLEQAIEKIDRECRARFKETFEKINAGFQRMFPKLFGGGKAALELTENNLLSAGVSVMAQPPGKRNSSIHLLSGGEKALTAAALVFAIFELNPAPFCLLDEVDAPLDDANVGRFSQLVKEMSEKVQFLFITHNKATMEIAQYLAGVTMREPGVSRIVTVDIDAAVELASV.

32–39 provides a ligand contact to ATP; sequence PNGCGKSN. Coiled-coil stretches lie at residues 170 to 265 and 307 to 481; these read ISKY…TGEE and IRHT…ERLN. Positions 525–620 constitute an SMC hinge domain; it reads DRLGEKIEVA…CASDPAEAAE (96 aa). 2 coiled-coil regions span residues 656–914 and 985–1014; these read ALAR…MKLA and RYLE…ECRA.

It belongs to the SMC family. Homodimer.

Its subcellular location is the cytoplasm. Its function is as follows. Required for chromosome condensation and partitioning. In Methylococcus capsulatus (strain ATCC 33009 / NCIMB 11132 / Bath), this protein is Chromosome partition protein Smc.